The chain runs to 221 residues: MASSLNLGSPAPPIKVQNWLRGDPLSNFQLGKIYVVEFFSIYCGYCAPELSDLAKLHKKFIDTRVEFIGIAASEEAATADDARAQVDASITKSLPNTNIRMGFDHSGEMDEDWLKASLSFHVPKTFVVDRDGSIAFIGDLVMLQDVLPKVIDGNWRASGKQRMPKRSGLLKARLMLRRLFHDRVSAAIEIKNWKAPLSAIEEGINLNPDSIFLRRNLYWHE.

In terms of domain architecture, Thioredoxin spans 5–156 (LNLGSPAPPI…LPKVIDGNWR (152 aa)). C43 and C46 form a disulfide bridge.

This sequence belongs to the thioredoxin family.

The protein is Protein FixW (fixW) of Rhizobium leguminosarum.